The sequence spans 173 residues: Crossover junction endodeoxyribonuclease RuvC (173 aa).

Catalysis depends on residues Asp-11, Glu-71, and Asp-143. Mg(2+)-binding residues include Asp-11, Glu-71, and Asp-143.

This sequence belongs to the RuvC family. As to quaternary structure, homodimer which binds Holliday junction (HJ) DNA. The HJ becomes 2-fold symmetrical on binding to RuvC with unstacked arms; it has a different conformation from HJ DNA in complex with RuvA. In the full resolvosome a probable DNA-RuvA(4)-RuvB(12)-RuvC(2) complex forms which resolves the HJ. The cofactor is Mg(2+).

It localises to the cytoplasm. It carries out the reaction Endonucleolytic cleavage at a junction such as a reciprocal single-stranded crossover between two homologous DNA duplexes (Holliday junction).. Functionally, the RuvA-RuvB-RuvC complex processes Holliday junction (HJ) DNA during genetic recombination and DNA repair. Endonuclease that resolves HJ intermediates. Cleaves cruciform DNA by making single-stranded nicks across the HJ at symmetrical positions within the homologous arms, yielding a 5'-phosphate and a 3'-hydroxyl group; requires a central core of homology in the junction. The consensus cleavage sequence is 5'-(A/T)TT(C/G)-3'. Cleavage occurs on the 3'-side of the TT dinucleotide at the point of strand exchange. HJ branch migration catalyzed by RuvA-RuvB allows RuvC to scan DNA until it finds its consensus sequence, where it cleaves and resolves the cruciform DNA. The protein is Crossover junction endodeoxyribonuclease RuvC of Brucella abortus (strain 2308).